Consider the following 312-residue polypeptide: Ribonuclease Z (312 aa).

Residues His62, His64, Asp66, His67, His139, Asp210, and His268 each coordinate Zn(2+). Residue Asp66 is the Proton acceptor of the active site.

It belongs to the RNase Z family. In terms of assembly, homodimer. Zn(2+) is required as a cofactor.

It carries out the reaction Endonucleolytic cleavage of RNA, removing extra 3' nucleotides from tRNA precursor, generating 3' termini of tRNAs. A 3'-hydroxy group is left at the tRNA terminus and a 5'-phosphoryl group is left at the trailer molecule.. Functionally, zinc phosphodiesterase, which displays some tRNA 3'-processing endonuclease activity. Probably involved in tRNA maturation, by removing a 3'-trailer from precursor tRNA. The protein is Ribonuclease Z of Crocosphaera subtropica (strain ATCC 51142 / BH68) (Cyanothece sp. (strain ATCC 51142)).